Reading from the N-terminus, the 451-residue chain is Tubulin alpha-2 chain (451 aa).

Gln11 is a binding site for GTP. Residue Lys40 is modified to N6-acetyllysine. Glu71, Gly144, Thr145, Thr179, Asn206, and Asn228 together coordinate GTP. Mg(2+) is bound at residue Glu71. Residue Glu254 is part of the active site.

The protein belongs to the tubulin family. Dimer of alpha and beta chains. A typical microtubule is a hollow water-filled tube with an outer diameter of 25 nm and an inner diameter of 15 nM. Alpha-beta heterodimers associate head-to-tail to form protofilaments running lengthwise along the microtubule wall with the beta-tubulin subunit facing the microtubule plus end conferring a structural polarity. Microtubules usually have 13 protofilaments but different protofilament numbers can be found in some organisms and specialized cells. Requires Mg(2+) as cofactor. Post-translationally, undergoes a tyrosination/detyrosination cycle, the cyclic removal and re-addition of a C-terminal tyrosine residue by the enzymes tubulin tyrosine carboxypeptidase (TTCP) and tubulin tyrosine ligase (TTL), respectively.

It is found in the cytoplasm. The protein localises to the cytoskeleton. The enzyme catalyses GTP + H2O = GDP + phosphate + H(+). Functionally, tubulin is the major constituent of microtubules, a cylinder consisting of laterally associated linear protofilaments composed of alpha- and beta-tubulin heterodimers. Microtubules grow by the addition of GTP-tubulin dimers to the microtubule end, where a stabilizing cap forms. Below the cap, tubulin dimers are in GDP-bound state, owing to GTPase activity of alpha-tubulin. This is Tubulin alpha-2 chain (TUBA2) from Chlamydomonas reinhardtii (Chlamydomonas smithii).